A 272-amino-acid chain; its full sequence is MAIPAALPPLPFNPTRVRSYMLRLPLFTRLVLLVILAFWLLELQTIWSVVQWGSLTPNEIGIGSMYRLNTYPFIHVGFFHAFVNLLALTPLLERFEAEHGTLTAVALFIGPLSTFPAGIYILVEKFILRSNTAVVGASVWIFLLLGSEAIKTFKSNPYFSLGTTKIPTWTSPLFACALVSIFVPNTSFLGHLSAIIIGYLLGLGYLKVFVPPEKILRWIEGKLNLLGRLPHYVSVDQKTYGRYGVLPTATAAVGGERPTPLSYLGTNQRLGP.

A run of 6 helical transmembrane segments spans residues 30 to 50 (LVLL…WSVV), 72 to 92 (PFIH…TPLL), 103 to 123 (TAVA…YILV), 133 to 153 (AVVG…IKTF), 164 to 184 (TKIP…IFVP), and 186 to 206 (TSFL…LGYL). Serine 138 (nucleophile) is an active-site residue. Histidine 191 is a catalytic residue.

This sequence belongs to the peptidase S54 family.

It localises to the membrane. It carries out the reaction Cleaves type-1 transmembrane domains using a catalytic dyad composed of serine and histidine that are contributed by different transmembrane domains.. In terms of biological role, rhomboid protease that catalyzes intramembrane proteolysis. Required for transcription factor srbA activation by mediating its release from the membrane and thereby regulating its activity under hypoxic conditions. Essential for iron homeostasis and resistance to azoles such as voriconazole. Required for virulence in murine models of invasive pulmonary aspergillosis (IPA). This chain is Rhomboid-type serine protease B, found in Aspergillus fumigatus (strain ATCC MYA-4609 / CBS 101355 / FGSC A1100 / Af293) (Neosartorya fumigata).